The following is a 354-amino-acid chain: Guanine nucleotide-binding protein G(t) subunit alpha-3 (354 aa).

Positions 1–27 (MGSGISSESKESAKRSKELEKKLQEDA) are disordered. The N-myristoyl glycine moiety is linked to residue Gly-2. Basic and acidic residues predominate over residues 8-27 (ESKESAKRSKELEKKLQEDA). The G-alpha domain occupies 32–354 (RTVKLLLLGA…KENLKDCGLF (323 aa)). Residues 35–48 (KLLLLGAGESGKST) form a G1 motif region. GTP contacts are provided by residues 40–47 (GAGESGKS), 175–181 (LHSRVKT), 200–204 (DVGGQ), 269–272 (NKKD), and Ala-326. Mg(2+) contacts are provided by Ser-47 and Thr-181. A G2 motif region spans residues 173 to 181 (DVLHSRVKT). The segment at 196–205 (FRMFDVGGQR) is G3 motif. Positions 265 to 272 (VLFLNKKD) are G4 motif. A G5 motif region spans residues 324–329 (TCATDT).

This sequence belongs to the G-alpha family. G(i/o/t/z) subfamily. In terms of assembly, g proteins are composed of 3 units; alpha, beta and gamma, respectively GNAT3, GNB1 and GNG13 for Gustducin heterotrimer for bitter taste transduction. The alpha chain contains the guanine nucleotide binding site. Component of the TAS2R14-GNAT3 complex, consisting of TAS2R14, GNAT3, GNB1 and GNG2; within the complex interacts with TAS2R14; this complex plays a role in the perception of bitterness. Gustducin heterotrimer may also be composed of GNAT3, GNB3 and GNG13. Post-translationally, potential N-myristoylation may anchor alpha-subunit to the inner surface of plasma membrane. As to expression, expressed in taste buds (sensory organs of clustered epithelial cells) of the circumvallate and foliate papillae of the tongue at protein level. Expressed in enteroendocrine L cells of the gut. Detected also in spermatozoa.

It localises to the cytoplasm. Functionally, guanine nucleotide-binding protein (G protein) alpha subunit playing a prominent role in bitter and sweet taste transduction as well as in umami (monosodium glutamate, monopotassium glutamate, and inosine monophosphate) taste transduction. Transduction by this alpha subunit involves coupling of specific cell-surface receptors with a cGMP-phosphodiesterase; Activation of phosphodiesterase lowers intracellular levels of cAMP and cGMP which may open a cyclic nucleotide-suppressible cation channel leading to influx of calcium, ultimately leading to release of neurotransmitter. Indeed, denatonium and strychnine induce transient reduction in cAMP and cGMP in taste tissue, whereas this decrease is inhibited by GNAT3 antibody. Gustducin heterotrimer transduces response to bitter and sweet compounds via regulation of phosphodiesterase for alpha subunit, as well as via activation of phospholipase C for beta and gamma subunits, with ultimate increase inositol trisphosphate and increase of intracellular Calcium. GNAT3 can functionally couple to taste receptors to transmit intracellular signal: receptor heterodimer TAS1R2/TAS1R3 senses sweetness and TAS1R1/TAS1R3 transduces umami taste, whereas the T2R family GPCRs such as TAS2R14 act as bitter sensors. Also functions as lumenal sugar sensors in the gut to control the expression of the Na+-glucose transporter SGLT1 in response to dietaty sugar, as well as the secretion of Glucagon-like peptide-1, GLP-1 and glucose-dependent insulinotropic polypeptide, GIP. Thus, may modulate the gut capacity to absorb sugars, with implications in malabsorption syndromes and diet-related disorders including diabetes and obesity. The polypeptide is Guanine nucleotide-binding protein G(t) subunit alpha-3 (GNAT3) (Homo sapiens (Human)).